The following is a 688-amino-acid chain: Collagen alpha-2(IX) chain (688 aa).

The signal sequence occupies residues 1 to 22 (MTAVPAPRSLFVLLQVLWLALA). A triple-helical region 4 (COL4) region spans residues 26 to 162 (GPPGEPGPPG…PGKPGRPGTI (137 aa)). The disordered stretch occupies residues 26–171 (GPPGEPGPPG…IQGLEGSADF (146 aa)). 2 stretches are compositionally biased toward pro residues: residues 28–42 (PGEP…PPGV) and 105–126 (LPGP…PGPV). Residues 128-137 (LPGEIGTPGP) are compositionally biased toward low complexity. Positions 138–156 (KGDPGPEGPSGPPGPPGKP) are enriched in pro residues. Proline 159 carries the post-translational modification 4-hydroxyproline. The segment at 163–179 (QGLEGSADFLCPTNCPA) is nonhelical region 4 (NC4). O-linked (Xyl...) (glycosaminoglycan) serine glycosylation occurs at serine 168. A triple-helical region 3 (COL3) region spans residues 180-518 (GVKGPQGLQG…PGRQGVVGRA (339 aa)). 5-hydroxylysine is present on lysine 182. Lysine 182 is a glycosylation site (O-linked (Gal...) hydroxylysine). Positions 183–517 (GPQGLQGVKG…QPGRQGVVGR (335 aa)) are disordered. Composition is skewed to low complexity over residues 289-314 (PQGI…PGIP) and 392-412 (RGPV…EQGP). Positions 435 to 444 (GPRGGVGDPG) are enriched in gly residues. Residues 502 to 517 (DRGVPGQPGRQGVVGR) show a composition bias toward low complexity. Positions 519–548 (ASDQHIVDVVLKMIQEQLAEVAVSAKREAL) are nonhelical region 3 (NC3). Positions 549 to 631 (GAAGMVGLPG…PGLPGRPGQA (83 aa)) are triple-helical region 2 (COL2). Positions 553-664 (MVGLPGPPGP…GPVGLPGFCE (112 aa)) are disordered. The span at 598 to 610 (KRGEKGDRGEMGH) shows a compositional bias: basic and acidic residues. A nonhelical region 2 (NC2) region spans residues 632–633 (IN). Residues 634–663 (GKDGDRGSPGAPGEAGRPGRPGPVGLPGFC) are triple-helical region 1 (COL1). A nonhelical region 1 (NC1) region spans residues 664–688 (EPAACLGASAYTSARLTEPGSIKGP).

The protein belongs to the fibril-associated collagens with interrupted helices (FACIT) family. As to quaternary structure, heterotrimer of an alpha 1(IX), an alpha 2(IX) and an alpha 3(IX) chain. The chains are linked to each other by interchain disulfide bonds. Trimers are also cross-linked via hydroxylysines. In terms of processing, covalently linked to the telopeptides of type II collagen by lysine-derived cross-links. Prolines at the third position of the tripeptide repeating unit (G-X-Y) are hydroxylated in some or all of the chains.

It is found in the secreted. The protein localises to the extracellular space. It localises to the extracellular matrix. In terms of biological role, structural component of hyaline cartilage and vitreous of the eye. The polypeptide is Collagen alpha-2(IX) chain (Col9a2) (Mus musculus (Mouse)).